Consider the following 288-residue polypeptide: DegV domain-containing protein DR_1903 (288 aa).

A DegV domain is found at 2–280 (IAVTTESTAD…PGVVAVLAFP (279 aa)). Hexadecanoate is bound by residues T59 and T93.

May bind long-chain fatty acids, such as palmitate, and may play a role in lipid transport or fatty acid metabolism. This is DegV domain-containing protein DR_1903 from Deinococcus radiodurans (strain ATCC 13939 / DSM 20539 / JCM 16871 / CCUG 27074 / LMG 4051 / NBRC 15346 / NCIMB 9279 / VKM B-1422 / R1).